Reading from the N-terminus, the 195-residue chain is Obelin (195 aa).

The propeptide occupies 1–6; it reads MSSKYA. EF-hand domains lie at 17–52, 53–88, 110–145, and 146–181; these read RWIK…DICA, KLEA…FPQF, LIRE…SGIS, and PSQE…FWYT. Residues D30, N32, N34, K36, and E41 each contribute to the Ca(2+) site. Positions 123, 125, 127, 129, 134, 159, 161, 163, 165, and 170 each coordinate Ca(2+).

This sequence belongs to the aequorin family.

In terms of biological role, ca(2+)-dependent bioluminescence photoprotein. Displays an emission peak at 470 nm (blue light). Trace amounts of calcium ion trigger the intramolecular oxidation of the chromophore, coelenterazine into coelenteramide and CO(2) with the concomitant emission of light. The protein is Obelin of Obelia longissima (Black sea hydrozoan).